A 458-amino-acid polypeptide reads, in one-letter code: ATP-dependent protease ATPase subunit HslU (458 aa).

Residues Val-18, 60–65 (GVGKTE), Asp-270, Glu-335, and Arg-407 contribute to the ATP site.

The protein belongs to the ClpX chaperone family. HslU subfamily. As to quaternary structure, a double ring-shaped homohexamer of HslV is capped on each side by a ring-shaped HslU homohexamer. The assembly of the HslU/HslV complex is dependent on binding of ATP.

It localises to the cytoplasm. ATPase subunit of a proteasome-like degradation complex; this subunit has chaperone activity. The binding of ATP and its subsequent hydrolysis by HslU are essential for unfolding of protein substrates subsequently hydrolyzed by HslV. HslU recognizes the N-terminal part of its protein substrates and unfolds these before they are guided to HslV for hydrolysis. This chain is ATP-dependent protease ATPase subunit HslU, found in Desulfitobacterium hafniense (strain DSM 10664 / DCB-2).